The following is a 928-amino-acid chain: Kinesin heavy chain (928 aa).

One can recognise a Kinesin motor domain in the interval 7–330 (SIKVVARFRP…LRFGMRAKSI (324 aa)). ATP is bound by residues 88–95 (GQTGAGKS) and 238–245 (GSEKVGKT). Residues 343 to 866 (AELKQMLAKA…VKDRLEAAKA (524 aa)) adopt a coiled-coil conformation. Over residues 395–409 (SKSASTTARPSTPSR) the composition is skewed to low complexity. 2 disordered regions span residues 395-434 (SKSASTTARPSTPSRLLPESRAETPAISDRAGTPSLPLDK) and 893-928 (GGGDAVAGATATNPTIATLQQNPPENKRSSWFFQKS). Over residues 905-928 (NPTIATLQQNPPENKRSSWFFQKS) the composition is skewed to polar residues.

It belongs to the TRAFAC class myosin-kinesin ATPase superfamily. Kinesin family. Kinesin subfamily.

It is found in the cytoplasm. The protein localises to the cytoskeleton. Kinesin is a microtubule-associated force-producing protein that may play a role in organelle transport. Its motor activity is directed toward the microtubule's plus end. This Neurospora crassa (strain ATCC 24698 / 74-OR23-1A / CBS 708.71 / DSM 1257 / FGSC 987) protein is Kinesin heavy chain (kin).